A 393-amino-acid polypeptide reads, in one-letter code: S-adenosylmethionine synthase (393 aa).

Residue His-16 participates in ATP binding. Asp-18 provides a ligand contact to Mg(2+). Glu-44 lines the K(+) pocket. L-methionine-binding residues include Glu-57 and Gln-100. The segment at Gln-100–Gln-110 is flexible loop. Residues Asp-167–Lys-169, Arg-238–Phe-239, Asp-247, Arg-253–Lys-254, Ala-270, and Lys-274 each bind ATP. Asp-247 lines the L-methionine pocket. Lys-278 lines the L-methionine pocket.

This sequence belongs to the AdoMet synthase family. Homotetramer; dimer of dimers. The cofactor is Mg(2+). It depends on K(+) as a cofactor.

It localises to the cytoplasm. It catalyses the reaction L-methionine + ATP + H2O = S-adenosyl-L-methionine + phosphate + diphosphate. Its pathway is amino-acid biosynthesis; S-adenosyl-L-methionine biosynthesis; S-adenosyl-L-methionine from L-methionine: step 1/1. Its function is as follows. Catalyzes the formation of S-adenosylmethionine (AdoMet) from methionine and ATP. The overall synthetic reaction is composed of two sequential steps, AdoMet formation and the subsequent tripolyphosphate hydrolysis which occurs prior to release of AdoMet from the enzyme. This Methylibium petroleiphilum (strain ATCC BAA-1232 / LMG 22953 / PM1) protein is S-adenosylmethionine synthase.